A 144-amino-acid polypeptide reads, in one-letter code: Nucleoside diphosphate kinase (144 aa).

Residues lysine 11, phenylalanine 59, arginine 87, threonine 93, arginine 104, and asparagine 114 each coordinate ATP. The active-site Pros-phosphohistidine intermediate is the histidine 117.

The protein belongs to the NDK family. As to quaternary structure, homotetramer. Mg(2+) is required as a cofactor.

The protein resides in the cytoplasm. The enzyme catalyses a 2'-deoxyribonucleoside 5'-diphosphate + ATP = a 2'-deoxyribonucleoside 5'-triphosphate + ADP. It carries out the reaction a ribonucleoside 5'-diphosphate + ATP = a ribonucleoside 5'-triphosphate + ADP. In terms of biological role, major role in the synthesis of nucleoside triphosphates other than ATP. The ATP gamma phosphate is transferred to the NDP beta phosphate via a ping-pong mechanism, using a phosphorylated active-site intermediate. The sequence is that of Nucleoside diphosphate kinase from Aliivibrio fischeri (strain ATCC 700601 / ES114) (Vibrio fischeri).